The sequence spans 342 residues: Lipopolysaccharide heptosyltransferase 1 (342 aa).

ADP-L-glycero-beta-D-manno-heptose-binding residues include serine 188, serine 189, lysine 193, glutamate 225, aspartate 268, serine 269, glycine 270, and histidine 273.

It belongs to the glycosyltransferase 9 family.

It localises to the cell inner membrane. It catalyses the reaction an alpha-Kdo-(2-&gt;4)-alpha-Kdo-(2-&gt;6)-lipid A + ADP-L-glycero-beta-D-manno-heptose = an L-alpha-D-Hep-(1-&gt;5)-[alpha-Kdo-(2-&gt;4)]-alpha-Kdo-(2-&gt;6)-lipid A + ADP + H(+). It functions in the pathway bacterial outer membrane biogenesis; LPS core biosynthesis. In terms of biological role, glycosyltransferase involved in the biosynthesis of the core oligosaccharide region of lipopolysaccharide (LPS). Catalyzes the addition of the first heptose unit to one 3-deoxy-D-manno-octulosonic acid (Kdo) residue of the Kdo2-lipid A module. In Campylobacter coli, this protein is Lipopolysaccharide heptosyltransferase 1.